The sequence spans 856 residues: DNA mismatch repair protein MutS (856 aa).

Position 607–614 (607–614) interacts with ATP; that stretch reads GPNMAGKS.

The protein belongs to the DNA mismatch repair MutS family.

Functionally, this protein is involved in the repair of mismatches in DNA. It is possible that it carries out the mismatch recognition step. This protein has a weak ATPase activity. This Cytophaga hutchinsonii (strain ATCC 33406 / DSM 1761 / CIP 103989 / NBRC 15051 / NCIMB 9469 / D465) protein is DNA mismatch repair protein MutS.